The sequence spans 612 residues: Dihydroxy-acid dehydratase (612 aa).

Asp81 contributes to the Mg(2+) binding site. Residue Cys122 coordinates [2Fe-2S] cluster. Mg(2+) contacts are provided by Asp123 and Lys124. N6-carboxylysine is present on Lys124. Cys195 contacts [2Fe-2S] cluster. Glu491 contacts Mg(2+). The Proton acceptor role is filled by Ser517.

Belongs to the IlvD/Edd family. Homodimer. It depends on [2Fe-2S] cluster as a cofactor. The cofactor is Mg(2+).

It catalyses the reaction (2R)-2,3-dihydroxy-3-methylbutanoate = 3-methyl-2-oxobutanoate + H2O. The catalysed reaction is (2R,3R)-2,3-dihydroxy-3-methylpentanoate = (S)-3-methyl-2-oxopentanoate + H2O. The protein operates within amino-acid biosynthesis; L-isoleucine biosynthesis; L-isoleucine from 2-oxobutanoate: step 3/4. Its pathway is amino-acid biosynthesis; L-valine biosynthesis; L-valine from pyruvate: step 3/4. In terms of biological role, functions in the biosynthesis of branched-chain amino acids. Catalyzes the dehydration of (2R,3R)-2,3-dihydroxy-3-methylpentanoate (2,3-dihydroxy-3-methylvalerate) into 2-oxo-3-methylpentanoate (2-oxo-3-methylvalerate) and of (2R)-2,3-dihydroxy-3-methylbutanoate (2,3-dihydroxyisovalerate) into 2-oxo-3-methylbutanoate (2-oxoisovalerate), the penultimate precursor to L-isoleucine and L-valine, respectively. The sequence is that of Dihydroxy-acid dehydratase from Haemophilus influenzae (strain 86-028NP).